We begin with the raw amino-acid sequence, 240 residues long: uncharacterized protein (240 aa).

Residues 197–210 show a composition bias toward polar residues; it reads PLKSHSASRLNHLT. A disordered region spans residues 197–222; that stretch reads PLKSHSASRLNHLTPSPRPGETPLEN.

This is an uncharacterized protein from Caenorhabditis elegans.